The sequence spans 210 residues: MEFSTADFERLIMFEHARKNSEAQYKNDPLDSENLLKWGGALLELSQFQPIPEAKLMLNDAISKLEEALTINPGKHQALWCIANAYTAHAFYVHDPEEAKEHFDKATEYFQRAENEDPGNDTYRKSLDSSLKAPELHMQFMNQGMGQQILGGGGGGGGGGMASSNVSQSSKKKKRNTEFTYDVCGWIILACGIVAWVGMAKSLGPPPPAR.

Residue methionine 1 is modified to N-acetylmethionine. Over 1–178 (MEFSTADFER…SSKKKKRNTE (178 aa)) the chain is Cytoplasmic. 2 TPR repeats span residues 42–75 (LLEL…NPGK) and 83–120 (ANAY…DPGN). A compositionally biased stretch (gly residues) spans 151 to 161 (GGGGGGGGGGM). The segment at 151–172 (GGGGGGGGGGMASSNVSQSSKK) is disordered. A helical transmembrane segment spans residues 179–199 (FTYDVCGWIILACGIVAWVGM). The Mitochondrial intermembrane portion of the chain corresponds to 200-210 (AKSLGPPPPAR).

The protein belongs to the Tom20 family. In terms of assembly, forms part of the preprotein translocase complex of the outer mitochondrial membrane (TOM complex) which consists of at least 6 different proteins (TOM5, TOM6, TOM7, TOM20, TOM22/TOM9 and TOM40). Component of a mitochondrial large protein complex that contains, at least, MIC60, DGS1, TOM40, TOM20 proteins, and petC/RISP. In terms of processing, the N-terminus is blocked. Expressed in roots, flowers, young cotyledons and leaves.

It localises to the mitochondrion outer membrane. In terms of biological role, central component of the receptor complex responsible for the recognition and translocation of cytosolically synthesized mitochondrial preproteins. Together with TOM22 functions as the transit peptide receptor at the surface of the mitochondrion outer membrane and facilitates the movement of preproteins into the translocation pore. This is Mitochondrial import receptor subunit TOM20-2 from Arabidopsis thaliana (Mouse-ear cress).